The following is a 401-amino-acid chain: Ribosomal RNA large subunit methyltransferase G (401 aa).

Belongs to the methyltransferase superfamily. RlmG family.

It is found in the cytoplasm. It carries out the reaction guanosine(1835) in 23S rRNA + S-adenosyl-L-methionine = N(2)-methylguanosine(1835) in 23S rRNA + S-adenosyl-L-homocysteine + H(+). Specifically methylates the guanine in position 1835 (m2G1835) of 23S rRNA. The protein is Ribosomal RNA large subunit methyltransferase G of Shewanella loihica (strain ATCC BAA-1088 / PV-4).